The sequence spans 210 residues: Nucleoside triphosphate pyrophosphatase (210 aa).

The active-site Proton acceptor is the Asp80.

This sequence belongs to the Maf family. A divalent metal cation serves as cofactor.

It localises to the cytoplasm. The catalysed reaction is a ribonucleoside 5'-triphosphate + H2O = a ribonucleoside 5'-phosphate + diphosphate + H(+). It carries out the reaction a 2'-deoxyribonucleoside 5'-triphosphate + H2O = a 2'-deoxyribonucleoside 5'-phosphate + diphosphate + H(+). Nucleoside triphosphate pyrophosphatase. May have a dual role in cell division arrest and in preventing the incorporation of modified nucleotides into cellular nucleic acids. The sequence is that of Nucleoside triphosphate pyrophosphatase from Mycobacterium sp. (strain JLS).